A 448-amino-acid polypeptide reads, in one-letter code: Phosphoglucosamine mutase (448 aa).

Ser102 functions as the Phosphoserine intermediate in the catalytic mechanism. Ser102, Asp241, Asp243, and Asp245 together coordinate Mg(2+). Ser102 bears the Phosphoserine mark.

Belongs to the phosphohexose mutase family. Requires Mg(2+) as cofactor. Activated by phosphorylation.

It catalyses the reaction alpha-D-glucosamine 1-phosphate = D-glucosamine 6-phosphate. Functionally, catalyzes the conversion of glucosamine-6-phosphate to glucosamine-1-phosphate. This Ruegeria pomeroyi (strain ATCC 700808 / DSM 15171 / DSS-3) (Silicibacter pomeroyi) protein is Phosphoglucosamine mutase.